Here is a 914-residue protein sequence, read N- to C-terminus: UPF0182 protein Syncc9605_1323 (914 aa).

9 consecutive transmembrane segments (helical) span residues 4–24 (LLLL…WLWF), 37–57 (WLLQ…ARAW), 81–101 (IALL…LDLL), 123–143 (RIGS…MTWL), 152–172 (IVAA…SLAL), 195–215 (FAGL…TLVF), 240–260 (MRLI…LVWL), 285–305 (LPLR…LLLP), and 312–332 (QFLA…TPLT).

The protein belongs to the UPF0182 family.

It localises to the cell membrane. The sequence is that of UPF0182 protein Syncc9605_1323 from Synechococcus sp. (strain CC9605).